A 602-amino-acid chain; its full sequence is UvrABC system protein C (602 aa).

Residues 15–92 (DLPGSYQMKD…IQKYQPYYNI (78 aa)) form the GIY-YIG domain. Positions 197–232 (GKAKASLTAKMERAAKNLQFERAAEIRDQLHYIEQT) constitute a UVR domain.

It belongs to the UvrC family. Interacts with UvrB in an incision complex.

The protein resides in the cytoplasm. Its function is as follows. The UvrABC repair system catalyzes the recognition and processing of DNA lesions. UvrC both incises the 5' and 3' sides of the lesion. The N-terminal half is responsible for the 3' incision and the C-terminal half is responsible for the 5' incision. The protein is UvrABC system protein C of Lacticaseibacillus paracasei (strain ATCC 334 / BCRC 17002 / CCUG 31169 / CIP 107868 / KCTC 3260 / NRRL B-441) (Lactobacillus paracasei).